A 193-amino-acid chain; its full sequence is Adenine phosphoribosyltransferase (193 aa).

Belongs to the purine/pyrimidine phosphoribosyltransferase family. Homodimer.

The protein resides in the cytoplasm. The enzyme catalyses AMP + diphosphate = 5-phospho-alpha-D-ribose 1-diphosphate + adenine. The protein operates within purine metabolism; AMP biosynthesis via salvage pathway; AMP from adenine: step 1/1. Catalyzes a salvage reaction resulting in the formation of AMP, that is energically less costly than de novo synthesis. This Bifidobacterium longum subsp. infantis (strain ATCC 15697 / DSM 20088 / JCM 1222 / NCTC 11817 / S12) protein is Adenine phosphoribosyltransferase.